A 511-amino-acid polypeptide reads, in one-letter code: MALRAMRGIVNGAAPELPVPTGGPAVGAREQALAVSRNYLSQPRLTYKTVSGVNGPLVILDHVKFPRYAEIVHLTLPDGTKRSGQVLEVSGSKAVVQVFEGTSGIDAKKTSCEFTGDILRTPVSEDMLGRVFNGSGKPIDRGPVVLAEDFLDIMGQPINPQCRIYPEEMIQTGISAIDGMNSIARGQKIPIFSAAGLPHNEIAAQICRQAGLVKKSKDVVDYSEENFAIVFAAMGVNMETARFFKSDFEENGSMDNVCLFLNLANDPTIERIITPRLALTTAEFLAYQCEKHVLVILTDMSSYAEALREVSAAREEVPGRRGFPGYMYTDLATIYERAGRVEGRNGSITQIPILTMPNDDITHPIPDLTGYITEGQIYVDRQLHNRQIYPPINVLPSLSRLMKSAIGEGMTRKDHADVSNQLYACYAIGKDVQAMKAVVGEEALTSDDLLYLEFLQKFERNFIAQGPYENRTVFETLDIGWQLLRIFPKEMLKRIPQSTLSEFYPRDSAKH.

Arg-400 serves as a coordination point for ATP.

It belongs to the ATPase alpha/beta chains family. As to quaternary structure, V-ATPase is a heteromultimeric enzyme made up of two complexes: the ATP-hydrolytic V1 complex and the proton translocation V0 complex. The V1 complex consists of three catalytic AB heterodimers that form a heterohexamer, three peripheral stalks each consisting of EG heterodimers, one central rotor including subunits D and F, and the regulatory subunits C and H. The proton translocation complex V0 consists of the proton transport subunit a, a ring of proteolipid subunits c9c'', rotary subunit d, subunits e and f, and the accessory subunits ATP6AP1/Ac45 and ATP6AP2/PRR. In terms of tissue distribution, kidney; localizes to early distal nephron, encompassing thick ascending limbs and distal convoluted tubules (at protein level).

It localises to the apical cell membrane. Its subcellular location is the melanosome. The protein resides in the cytoplasm. It is found in the cytoplasmic vesicle. The protein localises to the secretory vesicle. It localises to the synaptic vesicle membrane. Its subcellular location is the clathrin-coated vesicle membrane. Its function is as follows. Non-catalytic subunit of the V1 complex of vacuolar(H+)-ATPase (V-ATPase), a multisubunit enzyme composed of a peripheral complex (V1) that hydrolyzes ATP and a membrane integral complex (V0) that translocates protons. V-ATPase is responsible for acidifying and maintaining the pH of intracellular compartments and in some cell types, is targeted to the plasma membrane, where it is responsible for acidifying the extracellular environment. In renal intercalated cells, can partially compensate the lack of ATP6V1B1 and mediate secretion of protons (H+) into the urine under base-line conditions but not in conditions of acid load. This chain is V-type proton ATPase subunit B, brain isoform (ATP6V1B2), found in Homo sapiens (Human).